The primary structure comprises 619 residues: Zinc finger protein 668 (619 aa).

M1 is modified (N-acetylmethionine). S10 is subject to Phosphoserine. Residues 22-44 (YKCLFCTKTFPNAPRAARHAATH) form a C2H2-type 1 zinc finger. The tract at residues 36-74 (RAARHAATHTPTDCTEEVREAQPKVDTEPKAEEASGDKV) is disordered. Residues 51-71 (EEVREAQPKVDTEPKAEEASG) show a composition bias toward basic and acidic residues. Residues K59, K65, and K80 each participate in a glycyl lysine isopeptide (Lys-Gly) (interchain with G-Cter in SUMO2) cross-link. 11 consecutive C2H2-type zinc fingers follow at residues 84 to 106 (YACPLCPKAYKTAPELRSHGRSH), 112 to 134 (FPCPECGRRFMQPVCLRVHLASH), 140 to 162 (FRCTHCPKAYGTLSKLKIHQRGH), 168 to 190 (YACPDCGKSFADPSVFRKHRRTH), 196 to 218 (YSCERCGKAYAELKDLRNHERSH), 224 to 246 (FLCSECGKSFSRSSSLTCHQRIH), 252 to 274 (YRCPACGKGFTQLSSYQSHERTH), 280 to 302 (FLCPRCGRMFSDPSSFRRHQRAH), 308 to 330 (YRCEKCGKDFRQPADLAMHRRVH), 336 to 358 (FKCLQCDKTFVASWDLKRHALVH), and 364 to 386 (FRCEECGRAFAERASLTKHSRMH). A Glycyl lysine isopeptide (Lys-Gly) (interchain with G-Cter in SUMO2) cross-link involves residue K154. Phosphoserine is present on S387. The C2H2-type 13 zinc-finger motif lies at 392 to 414 (FHCNACGKSFVVLSSLRKHERTH). The interval 491–513 (VGEAPSTLGDAGEVGGEETDEKP) is disordered. K512 is covalently cross-linked (Glycyl lysine isopeptide (Lys-Gly) (interchain with G-Cter in SUMO2)). C2H2-type zinc fingers lie at residues 516–538 (FVCRECKETFSTLTLLRRHERSH), 544–566 (FPCTQCGKSFSDRAGLRKHSRTH), and 572–594 (YSCSQCPKAFLSASDLRKHERTH).

Belongs to the krueppel C2H2-type zinc-finger protein family.

It localises to the nucleus. Its function is as follows. May be involved in transcriptional regulation. May play a role in DNA repair process. The protein is Zinc finger protein 668 (Znf668) of Mus musculus (Mouse).